The primary structure comprises 220 residues: Dual specificity phosphatase 29 (220 aa).

Residues 1-15 show a composition bias toward polar residues; sequence MTSGEVKTSLKNAYS. Positions 1–29 are disordered; the sequence is MTSGEVKTSLKNAYSSAKRLSPKMEEEGE. Residues 54–202 form the Tyrosine-protein phosphatase domain; sequence HVNEVWPKLY…LRELDKQLVQ (149 aa). 146-153 lines the substrate pocket; it reads HCVMGRSR. Cys147 functions as the Phosphocysteine intermediate in the catalytic mechanism.

Belongs to the protein-tyrosine phosphatase family. Non-receptor class dual specificity subfamily. In terms of assembly, homodimer. Interacts with PRKAA2.

The protein resides in the cytoplasm. Its subcellular location is the nucleus. The catalysed reaction is O-phospho-L-tyrosyl-[protein] + H2O = L-tyrosyl-[protein] + phosphate. It carries out the reaction O-phospho-L-seryl-[protein] + H2O = L-seryl-[protein] + phosphate. It catalyses the reaction O-phospho-L-threonyl-[protein] + H2O = L-threonyl-[protein] + phosphate. Dual specificity phosphatase able to dephosphorylate phosphotyrosine, phosphoserine and phosphothreonine residues within the same substrate, with a preference for phosphotyrosine as a substrate. Involved in the modulation of intracellular signaling cascades. In skeletal muscle regulates systemic glucose homeostasis by activating, AMPK, an energy sensor protein kinase. Affects MAP kinase signaling though modulation of the MAPK1/2 cascade in skeletal muscle promoting muscle cell differentiation, development and atrophy. The protein is Dual specificity phosphatase 29 of Homo sapiens (Human).